We begin with the raw amino-acid sequence, 562 residues long: MNSPGAVDVVIVGAGPVGLTLANILGGQGVRTLIIEERETLIDYPRGVGLDDESLRTFQSIGLVDAILPHTVPNQILRFYDANRRLLAEMAPPDARFGWPKRNGFVQPMVDAELLAGLDRFDHVEVMWGRRMQTIAEDADGVTVEVSGPDGPASVHAQYVVGCDGGRSATRHLMGVSFDGTTSSTRWVVIDLANDPLGHPNSEVGADPQRPYASISIAHGIRRFEFMIHADETDEQAEDPEFVAELLRPFVPHPDRVDVIRRRVYTHHSRIAGSFRKGRMLLAGDAAHLMPVWQGQGYNSGIRDAFNLGWKLAAVVRGQAGDALLDTYDAERRKHARAMIDLSTMVGRVISPTNRKVAALRDKLIRGASIVPTLKRYVLEMRFKPMPRYHEGAVYHAKPPTPASPVGTLFIQPRVDTREQDNVLLDDVLGTGFAVLCWNNNPRTLLGEAAFTRWKALGATFIAARPSTQLHWTKDDDPDVVIVGDRTGALKAFFDAHTESVLVLRPDRCIAGADIAQRAPELSTALFGILHLRQGGENGATGPVLYVPQPTAESSGTVGRAS.

Residues Asp8–Glu37 and Phe275–Asp285 each bind FAD.

It belongs to the PheA/TfdB FAD monooxygenase family. The cofactor is FAD.

The catalysed reaction is 3-(3-hydroxyphenyl)propanoate + NADH + O2 + H(+) = 3-(2,3-dihydroxyphenyl)propanoate + NAD(+) + H2O. The enzyme catalyses (2E)-3-(3-hydroxyphenyl)prop-2-enoate + NADH + O2 + H(+) = (2E)-3-(2,3-dihydroxyphenyl)prop-2-enoate + NAD(+) + H2O. It functions in the pathway aromatic compound metabolism; 3-phenylpropanoate degradation. In terms of biological role, catalyzes the insertion of one atom of molecular oxygen into position 2 of the phenyl ring of 3-(3-hydroxyphenyl)propionate (3-HPP) and hydroxycinnamic acid (3HCI). The sequence is that of 3-(3-hydroxy-phenyl)propionate/3-hydroxycinnamic acid hydroxylase from Mycolicibacterium smegmatis (strain ATCC 700084 / mc(2)155) (Mycobacterium smegmatis).